A 620-amino-acid chain; its full sequence is 1-deoxy-D-xylulose-5-phosphate synthase (620 aa).

Thiamine diphosphate is bound by residues His80 and 121 to 123 (GHS). Asp152 serves as a coordination point for Mg(2+). Residues 153-154 (GA), Asn181, Tyr288, and Glu370 contribute to the thiamine diphosphate site. Asn181 is a binding site for Mg(2+).

It belongs to the transketolase family. DXPS subfamily. In terms of assembly, homodimer. Mg(2+) is required as a cofactor. Requires thiamine diphosphate as cofactor.

It catalyses the reaction D-glyceraldehyde 3-phosphate + pyruvate + H(+) = 1-deoxy-D-xylulose 5-phosphate + CO2. It functions in the pathway metabolic intermediate biosynthesis; 1-deoxy-D-xylulose 5-phosphate biosynthesis; 1-deoxy-D-xylulose 5-phosphate from D-glyceraldehyde 3-phosphate and pyruvate: step 1/1. Catalyzes the acyloin condensation reaction between C atoms 2 and 3 of pyruvate and glyceraldehyde 3-phosphate to yield 1-deoxy-D-xylulose-5-phosphate (DXP). This is 1-deoxy-D-xylulose-5-phosphate synthase from Klebsiella pneumoniae (strain 342).